The primary structure comprises 60 residues: Large ribosomal subunit protein bL32 (60 aa).

A compositionally biased stretch (basic residues) spans 1–16 (MAVPRRKTSPSRRGMR). Positions 1 to 60 (MAVPRRKTSPSRRGMRRSADAIKKPTYVEDKDSGELRRPHHLDLKTGMYKGRQVLKKKDA) are disordered. Basic and acidic residues predominate over residues 17-44 (RSADAIKKPTYVEDKDSGELRRPHHLDL).

This sequence belongs to the bacterial ribosomal protein bL32 family.

This chain is Large ribosomal subunit protein bL32, found in Bradyrhizobium sp. (strain BTAi1 / ATCC BAA-1182).